The following is an 804-amino-acid chain: uncharacterized protein (804 aa).

10 helical membrane-spanning segments follow: residues 15–35 (LLIV…LGNI), 243–263 (FLLL…AVAM), 301–321 (LSAV…MVLL), 333–353 (SLWP…LVGL), 381–401 (FYLP…MGGS), 403–423 (LLWA…VLGW), 453–473 (TLSQ…LLVL), 680–700 (ALEV…LAQV), 734–754 (MLGF…LAVL), and 769–789 (LWIV…GWLG).

The protein belongs to the ABC-4 integral membrane protein family.

The protein localises to the cell membrane. This is an uncharacterized protein from Escherichia coli (strain K12).